A 158-amino-acid chain; its full sequence is Transcriptional repressor NrdR (158 aa).

Residues 3 to 34 (CPYCQSEDTQVKDSRPAEDGAVIRRRRVCSVC) fold into a zinc finger. In terms of domain architecture, ATP-cone spans 49-139 (LMVVKKSGRR…VYRNFSKAVD (91 aa)).

The protein belongs to the NrdR family. The cofactor is Zn(2+).

Its function is as follows. Negatively regulates transcription of bacterial ribonucleotide reductase nrd genes and operons by binding to NrdR-boxes. The polypeptide is Transcriptional repressor NrdR (Brucella abortus (strain S19)).